The following is a 162-amino-acid chain: uncharacterized protein (162 aa).

Residues 29–50 (CPFCDYTNADAKVVRKHVKSKH) form a C2H2-type zinc finger. The tract at residues 60–93 (KLESQKSKNNGKKQTGQKKQGKGKKQPKRVRETC) is disordered. The span at 68–87 (NNGKKQTGQKKQGKGKKQPK) shows a compositional bias: basic residues.

To M.jannaschii MJECS06.

This is an uncharacterized protein from Methanocaldococcus jannaschii (strain ATCC 43067 / DSM 2661 / JAL-1 / JCM 10045 / NBRC 100440) (Methanococcus jannaschii).